Reading from the N-terminus, the 323-residue chain is Cyclin-H (323 aa).

Position 5 is a phosphoserine; by CDK8 (Ser-5). Ser-132 bears the Phosphoserine mark. The interval 297–323 is disordered; the sequence is YEDDDYVSKKSKHEEEEWTDDDLVESL. The span at 302–311 shows a compositional bias: basic and acidic residues; it reads YVSKKSKHEE. Residue Ser-304 is modified to Phosphoserine; by CDK8. Residues 312 to 323 show a composition bias toward acidic residues; the sequence is EEWTDDDLVESL. The residue at position 315 (Thr-315) is a Phosphothreonine. Ser-322 is modified (phosphoserine).

This sequence belongs to the cyclin family. Cyclin C subfamily. As to quaternary structure, associates primarily with CDK7 and MAT1 to form the CAK complex. CAK can further associate with the core-TFIIH to form the TFIIH basal transcription factor.

It localises to the nucleus. Functionally, regulates CDK7, the catalytic subunit of the CDK-activating kinase (CAK) enzymatic complex. CAK activates the cyclin-associated kinases CDK1, CDK2, CDK4 and CDK6 by threonine phosphorylation. CAK complexed to the core-TFIIH basal transcription factor activates RNA polymerase II by serine phosphorylation of the repetitive C-terminal domain (CTD) of its large subunit (POLR2A), allowing its escape from the promoter and elongation of the transcripts. Involved in cell cycle control and in RNA transcription by RNA polymerase II. Its expression and activity are constant throughout the cell cycle. The chain is Cyclin-H (CCNH) from Homo sapiens (Human).